Reading from the N-terminus, the 336-residue chain is Dihydroorotate dehydrogenase (quinone) (336 aa).

Residues 62–66 and T86 each bind FMN; that span reads AGLDK. A substrate-binding site is contributed by K66. 111-115 is a binding site for substrate; it reads NRMGF. FMN contacts are provided by N139 and N172. Residue N172 coordinates substrate. Catalysis depends on S175, which acts as the Nucleophile. N177 lines the substrate pocket. FMN is bound by residues K217 and T245. Residue 246 to 247 coordinates substrate; sequence NT. Residues G268, G297, and 318–319 contribute to the FMN site; that span reads YS.

This sequence belongs to the dihydroorotate dehydrogenase family. Type 2 subfamily. Monomer. FMN is required as a cofactor.

It localises to the cell membrane. It catalyses the reaction (S)-dihydroorotate + a quinone = orotate + a quinol. Its pathway is pyrimidine metabolism; UMP biosynthesis via de novo pathway; orotate from (S)-dihydroorotate (quinone route): step 1/1. Functionally, catalyzes the conversion of dihydroorotate to orotate with quinone as electron acceptor. This is Dihydroorotate dehydrogenase (quinone) from Vibrio vulnificus (strain CMCP6).